The chain runs to 232 residues: Noggin (232 aa).

The N-terminal stretch at M1–G27 is a signal peptide. N62 carries an N-linked (GlcNAc...) asparagine glycan. The tract at residues G77–G96 is disordered. 4 cysteine pairs are disulfide-bonded: C155–C192, C178–C228, C184–C230, and C207–C215.

This sequence belongs to the noggin family. In terms of assembly, homodimer. Interacts with GDF5; inhibits chondrocyte differentiation.

It is found in the secreted. Functionally, inhibitor of bone morphogenetic proteins (BMP) signaling which is required for growth and patterning of the neural tube and somite. Essential for cartilage morphogenesis and joint formation. Inhibits chondrocyte differentiation through its interaction with GDF5 and, probably, GDF6. This chain is Noggin (NOG), found in Homo sapiens (Human).